Reading from the N-terminus, the 384-residue chain is MYLQELQLQQFRNYPTAKLTFGQGINVLLGENAQGKTNLLEAIYVLALTRSHRTANDHDLVNWQAKTAKVSGRVVKAAGAVPLELTFSRQGKRARVNHLEQARLSQYVGQLNVILFAPEDLAIVKGAPTVRRRFMDMEFGQMNPRYLYNLSQYRTLLKQRNRYLKDLQHKQNKDLLFLSVLSDQLAAFGAEIIAQRLAMLQKLEHWAQAIHGEISQQREELTFHYATQVADDQLTDVPTITAALSALYAKQQDKELYQGTTLVGPHRDDLHFQVNGKNVQTFGSQGQQRTTALSVKLAEIDLMKEETGEYPVLLLDDVLSELDDARQTHLLTAIQDKVQTFITTTSLSGITRQLIKDPTIFHVAEGTVVADAVDSDDPAASKED.

Residue 30 to 37 coordinates ATP; sequence GENAQGKT.

It belongs to the RecF family.

The protein localises to the cytoplasm. The RecF protein is involved in DNA metabolism; it is required for DNA replication and normal SOS inducibility. RecF binds preferentially to single-stranded, linear DNA. It also seems to bind ATP. The protein is DNA replication and repair protein RecF of Levilactobacillus brevis (strain ATCC 367 / BCRC 12310 / CIP 105137 / JCM 1170 / LMG 11437 / NCIMB 947 / NCTC 947) (Lactobacillus brevis).